A 259-amino-acid chain; its full sequence is Phosphatidylglycerol--prolipoprotein diacylglyceryl transferase (259 aa).

The next 4 membrane-spanning stretches (helical) occupy residues 10 to 30, 50 to 70, 86 to 106, and 112 to 132; these read IGLL…LFAY, IISW…ILFY, WKGG…MYIF, and IKFL…IFLG. Residue Arg133 coordinates a 1,2-diacyl-sn-glycero-3-phospho-(1'-sn-glycerol). 3 helical membrane passes run 169–189, 197–217, and 227–247; these read LYEA…LFFF, GMLF…IEFV, and ILFN…ILGI.

It belongs to the Lgt family.

It is found in the cell inner membrane. It catalyses the reaction L-cysteinyl-[prolipoprotein] + a 1,2-diacyl-sn-glycero-3-phospho-(1'-sn-glycerol) = an S-1,2-diacyl-sn-glyceryl-L-cysteinyl-[prolipoprotein] + sn-glycerol 1-phosphate + H(+). The protein operates within protein modification; lipoprotein biosynthesis (diacylglyceryl transfer). Functionally, catalyzes the transfer of the diacylglyceryl group from phosphatidylglycerol to the sulfhydryl group of the N-terminal cysteine of a prolipoprotein, the first step in the formation of mature lipoproteins. The sequence is that of Phosphatidylglycerol--prolipoprotein diacylglyceryl transferase from Ehrlichia ruminantium (strain Gardel).